Consider the following 297-residue polypeptide: Acetyl-coenzyme A carboxylase carboxyl transferase subunit beta (297 aa).

A CoA carboxyltransferase N-terminal domain is found at 27–296; the sequence is LWHKCPACEA…PEQAREAAAV (270 aa). The Zn(2+) site is built by Cys31, Cys34, Cys50, and Cys53. A C4-type zinc finger spans residues 31–53; the sequence is CPACEAVLYRPELEKTLDVCPKC.

This sequence belongs to the AccD/PCCB family. In terms of assembly, acetyl-CoA carboxylase is a heterohexamer composed of biotin carboxyl carrier protein (AccB), biotin carboxylase (AccC) and two subunits each of ACCase subunit alpha (AccA) and ACCase subunit beta (AccD). Zn(2+) serves as cofactor.

The protein resides in the cytoplasm. It carries out the reaction N(6)-carboxybiotinyl-L-lysyl-[protein] + acetyl-CoA = N(6)-biotinyl-L-lysyl-[protein] + malonyl-CoA. The protein operates within lipid metabolism; malonyl-CoA biosynthesis; malonyl-CoA from acetyl-CoA: step 1/1. Component of the acetyl coenzyme A carboxylase (ACC) complex. Biotin carboxylase (BC) catalyzes the carboxylation of biotin on its carrier protein (BCCP) and then the CO(2) group is transferred by the transcarboxylase to acetyl-CoA to form malonyl-CoA. This is Acetyl-coenzyme A carboxylase carboxyl transferase subunit beta from Pseudomonas putida (strain W619).